The primary structure comprises 54 residues: UPF0391 membrane protein BMEI0373 (54 aa).

The next 2 membrane-spanning stretches (helical) occupy residues 5 to 25 (VLVFLVVALVAGALGFGGIAG) and 29 to 48 (GIAQILFFFFLALLVISLIA).

The protein belongs to the UPF0391 family.

The protein resides in the cell membrane. In Brucella melitensis biotype 1 (strain ATCC 23456 / CCUG 17765 / NCTC 10094 / 16M), this protein is UPF0391 membrane protein BMEI0373.